The following is a 589-amino-acid chain: Glutamine--fructose-6-phosphate aminotransferase [isomerizing] (589 aa).

Cysteine 2 serves as the catalytic Nucleophile; for GATase activity. A Glutamine amidotransferase type-2 domain is found at 2–221 (CGIIGIVSLR…DDELGFITPE (220 aa)). SIS domains follow at residues 286-426 (VIEE…KMEK) and 445-579 (IGEE…PDKP). The active-site For Fru-6P isomerization activity is the lysine 584.

In terms of assembly, homodimer.

The protein localises to the cytoplasm. It carries out the reaction D-fructose 6-phosphate + L-glutamine = D-glucosamine 6-phosphate + L-glutamate. In terms of biological role, catalyzes the first step in hexosamine metabolism, converting fructose-6P into glucosamine-6P using glutamine as a nitrogen source. This chain is Glutamine--fructose-6-phosphate aminotransferase [isomerizing], found in Sulfurisphaera tokodaii (strain DSM 16993 / JCM 10545 / NBRC 100140 / 7) (Sulfolobus tokodaii).